A 384-amino-acid polypeptide reads, in one-letter code: uncharacterized protein (384 aa).

Residues glutamate 137 to alanine 303 form the Integrase catalytic domain.

This is an uncharacterized protein from Escherichia coli (strain K12).